The sequence spans 513 residues: Protein disulfide-isomerase (513 aa).

A signal peptide spans 1–23 (MAIRSKAWISLLLALAVALSARA). The Thioredoxin 1 domain occupies 24 to 145 (EEEPAAAAEG…IVDYLKKQVG (122 aa)). Residues cysteine 63 and cysteine 66 each act as nucleophile in the active site. An intrachain disulfide couples cysteine 63 to cysteine 66. The N-linked (GlcNAc...) asparagine glycan is linked to asparagine 279. In terms of domain architecture, Thioredoxin 2 spans 366–485 (FRNSEPIPEV…IVDFIKKSKE (120 aa)). Residues cysteine 408 and cysteine 411 each act as nucleophile in the active site. Cysteine 408 and cysteine 411 form a disulfide bridge. The segment at 485–513 (ETAAPHHHHHPGATGIREGSRAEPVKDEL) is disordered. The segment covering 502–513 (EGSRAEPVKDEL) has biased composition (basic and acidic residues). The Prevents secretion from ER motif lies at 510–513 (KDEL).

The protein belongs to the protein disulfide isomerase family.

The protein localises to the endoplasmic reticulum lumen. It carries out the reaction Catalyzes the rearrangement of -S-S- bonds in proteins.. Participates in the folding of proteins containing disulfide bonds, may be involved in glycosylation, prolyl hydroxylation and triglyceride transfer. The chain is Protein disulfide-isomerase (PDI) from Zea mays (Maize).